The chain runs to 155 residues: Rusticyanin (155 aa).

The region spanning 53 to 155 (SFEVHDKKNP…TGMFGKIIVK (103 aa)) is the Plastocyanin-like domain. 4 residues coordinate Cu cation: His-85, Cys-138, His-143, and Met-148.

In terms of assembly, monomer. The cofactor is Cu cation.

It localises to the periplasm. Its function is as follows. Electron carrier from cytochrome c552 to the A-type oxidase. The chain is Rusticyanin (rus) from Acidithiobacillus ferrooxidans (Thiobacillus ferrooxidans).